The following is a 250-amino-acid chain: uncharacterized protein (250 aa).

This is an uncharacterized protein from Mycobacterium tuberculosis (strain CDC 1551 / Oshkosh).